The following is a 254-amino-acid chain: Sugar fermentation stimulation protein homolog (254 aa).

The protein belongs to the SfsA family.

The chain is Sugar fermentation stimulation protein homolog from Parasynechococcus marenigrum (strain WH8102).